A 277-amino-acid polypeptide reads, in one-letter code: uncharacterized protein (277 aa).

Disordered regions lie at residues 1–103 (PPLR…LEDP) and 254–277 (PSPS…SPPR). Basic and acidic residues predominate over residues 48–65 (RRNDTGKDRGTHRQRAET). Over residues 66-77 (PSRSPVPTTNTV) the composition is skewed to polar residues. Basic residues predominate over residues 82-91 (PAVRRQRRTQ).

This is an uncharacterized protein from Homo sapiens (Human).